The chain runs to 315 residues: Hydrogenase-4 component C (315 aa).

The Periplasmic segment spans residues methionine 1–leucine 10. Residues valine 11 to isoleucine 31 traverse the membrane as a helical segment. At serine 32 to arginine 73 the chain is on the cytoplasmic side. A helical transmembrane segment spans residues leucine 74–isoleucine 94. Residues threonine 95–proline 98 lie on the Periplasmic side of the membrane. The chain crosses the membrane as a helical span at residues phenylalanine 99–phenylalanine 119. Residues alanine 120–threonine 140 are Cytoplasmic-facing. A helical membrane pass occupies residues leucine 141 to glycine 161. Over serine 162–threonine 181 the chain is Periplasmic. The helical transmembrane segment at threonine 182–phenylalanine 202 threads the bilayer. At aspartate 203–lysine 228 the chain is on the cytoplasmic side. Residues tryptophan 229 to phenylalanine 249 traverse the membrane as a helical segment. The Periplasmic segment spans residues glycine 250–serine 256. Residues leucine 257–leucine 277 traverse the membrane as a helical segment. Topologically, residues alanine 278 to arginine 289 are cytoplasmic. The helical transmembrane segment at phenylalanine 290 to phenylalanine 310 threads the bilayer. The Periplasmic portion of the chain corresponds to tryptophan 311–leucine 315.

The protein belongs to the complex I subunit 1 family.

It localises to the cell inner membrane. In terms of biological role, possible component of hydrogenase 4. The protein is Hydrogenase-4 component C of Escherichia coli (strain K12).